The sequence spans 261 residues: Cytochrome c oxidase subunit 3 (261 aa).

Over 1–15 (MTHQTHAYHMVNPSP) the chain is Mitochondrial matrix. Residues 16–34 (WPLTGALSALLLTSGLIMW) form a helical membrane-spanning segment. At 35 to 40 (FHFNSF) the chain is on the mitochondrial intermembrane side. A helical transmembrane segment spans residues 41 to 66 (LLVIIGLTCMLLTMYQWWRDIVREGT). Residues 67–72 (FQGHHT) are Mitochondrial matrix-facing. Residues 73–105 (PVVQKGLRYGMVLFIVSEVFFFLGFFWAFYHSS) form a helical membrane-spanning segment. The Mitochondrial intermembrane portion of the chain corresponds to 106 to 128 (LAPTPELGGCWPPTGIHPLNPLE). A helical membrane pass occupies residues 129–152 (VPLLNTSILLASGVSITWAHHSLM). Residues 153-155 (EGN) are Mitochondrial matrix-facing. Residues 156 to 183 (RKQMIQALSITILLGIYFTILQASEYYE) traverse the membrane as a helical segment. The Mitochondrial intermembrane portion of the chain corresponds to 184-190 (SSFTISD). A helical transmembrane segment spans residues 191–223 (GVYGSTFFVATGFHGLHVIIGTTFLIVCLLRQF). Residues 224–232 (NFHFTSTHH) are Mitochondrial matrix-facing. Residues 233–256 (FGFEAAAWYWHFVDVVWLFLYVSI) form a helical membrane-spanning segment. The Mitochondrial intermembrane portion of the chain corresponds to 257 to 261 (YWWGS).

The protein belongs to the cytochrome c oxidase subunit 3 family. Component of the cytochrome c oxidase (complex IV, CIV), a multisubunit enzyme composed of 14 subunits. The complex is composed of a catalytic core of 3 subunits MT-CO1, MT-CO2 and MT-CO3, encoded in the mitochondrial DNA, and 11 supernumerary subunits COX4I, COX5A, COX5B, COX6A, COX6B, COX6C, COX7A, COX7B, COX7C, COX8 and NDUFA4, which are encoded in the nuclear genome. The complex exists as a monomer or a dimer and forms supercomplexes (SCs) in the inner mitochondrial membrane with NADH-ubiquinone oxidoreductase (complex I, CI) and ubiquinol-cytochrome c oxidoreductase (cytochrome b-c1 complex, complex III, CIII), resulting in different assemblies (supercomplex SCI(1)III(2)IV(1) and megacomplex MCI(2)III(2)IV(2)).

Its subcellular location is the mitochondrion inner membrane. The catalysed reaction is 4 Fe(II)-[cytochrome c] + O2 + 8 H(+)(in) = 4 Fe(III)-[cytochrome c] + 2 H2O + 4 H(+)(out). Component of the cytochrome c oxidase, the last enzyme in the mitochondrial electron transport chain which drives oxidative phosphorylation. The respiratory chain contains 3 multisubunit complexes succinate dehydrogenase (complex II, CII), ubiquinol-cytochrome c oxidoreductase (cytochrome b-c1 complex, complex III, CIII) and cytochrome c oxidase (complex IV, CIV), that cooperate to transfer electrons derived from NADH and succinate to molecular oxygen, creating an electrochemical gradient over the inner membrane that drives transmembrane transport and the ATP synthase. Cytochrome c oxidase is the component of the respiratory chain that catalyzes the reduction of oxygen to water. Electrons originating from reduced cytochrome c in the intermembrane space (IMS) are transferred via the dinuclear copper A center (CU(A)) of subunit 2 and heme A of subunit 1 to the active site in subunit 1, a binuclear center (BNC) formed by heme A3 and copper B (CU(B)). The BNC reduces molecular oxygen to 2 water molecules using 4 electrons from cytochrome c in the IMS and 4 protons from the mitochondrial matrix. This chain is Cytochrome c oxidase subunit 3 (MT-CO3), found in Osphranter robustus (Wallaroo).